Consider the following 207-residue polypeptide: Large ribosomal subunit protein uL4 (207 aa).

Positions 48 to 70 (KAQKTRSEVSGGGAKPWRQKGTG) are disordered.

Belongs to the universal ribosomal protein uL4 family. As to quaternary structure, part of the 50S ribosomal subunit.

In terms of biological role, one of the primary rRNA binding proteins, this protein initially binds near the 5'-end of the 23S rRNA. It is important during the early stages of 50S assembly. It makes multiple contacts with different domains of the 23S rRNA in the assembled 50S subunit and ribosome. Functionally, forms part of the polypeptide exit tunnel. The polypeptide is Large ribosomal subunit protein uL4 (Francisella tularensis subsp. holarctica (strain FTNF002-00 / FTA)).